A 1134-amino-acid chain; its full sequence is DNA damage-binding protein 1 (1134 aa).

Belongs to the DDB1 family. Interacts with cdt-1 and cul-4. As to expression, expressed at high levels in the spermatheca of adult hermaphrodites.

It is found in the cytoplasm. The protein localises to the nucleus. It functions in the pathway protein modification; protein ubiquitination. Plays a role in DNA repair. May be a component of an E3 ubiquitin-protein ligase which promotes histone ubiquitination in response to UV irradiation. Histone ubiquitination may be important for subsequent DNA repair. Promotes the degradation of the replication licensing factor cdt-1 during S-phase, thereby preventing rereplication of DNA during a single round of cell division. This chain is DNA damage-binding protein 1 (ddb-1), found in Caenorhabditis elegans.